Consider the following 181-residue polypeptide: Large ribosomal subunit protein uL5 (181 aa).

The protein belongs to the universal ribosomal protein uL5 family. Part of the 50S ribosomal subunit; part of the 5S rRNA/L5/L18/L25 subcomplex. Contacts the 5S rRNA and the P site tRNA. Forms a bridge to the 30S subunit in the 70S ribosome.

Functionally, this is one of the proteins that bind and probably mediate the attachment of the 5S RNA into the large ribosomal subunit, where it forms part of the central protuberance. In the 70S ribosome it contacts protein S13 of the 30S subunit (bridge B1b), connecting the 2 subunits; this bridge is implicated in subunit movement. Contacts the P site tRNA; the 5S rRNA and some of its associated proteins might help stabilize positioning of ribosome-bound tRNAs. The chain is Large ribosomal subunit protein uL5 from Clostridium kluyveri (strain NBRC 12016).